A 452-amino-acid polypeptide reads, in one-letter code: UDP-N-acetylmuramoylalanine--D-glutamate ligase (452 aa).

115–121 (GTNGKTT) contributes to the ATP binding site.

It belongs to the MurCDEF family.

Its subcellular location is the cytoplasm. It catalyses the reaction UDP-N-acetyl-alpha-D-muramoyl-L-alanine + D-glutamate + ATP = UDP-N-acetyl-alpha-D-muramoyl-L-alanyl-D-glutamate + ADP + phosphate + H(+). The protein operates within cell wall biogenesis; peptidoglycan biosynthesis. Functionally, cell wall formation. Catalyzes the addition of glutamate to the nucleotide precursor UDP-N-acetylmuramoyl-L-alanine (UMA). The sequence is that of UDP-N-acetylmuramoylalanine--D-glutamate ligase from Geobacter sp. (strain M21).